The sequence spans 513 residues: Microtubule-associated protein 70-5 (513 aa).

4 disordered regions span residues 1–20, 60–81, 347–367, and 393–413; these read MTAA…SQLK, KLGA…LEEE, FLTS…GSVT, and ANGL…EDGN. A compositionally biased stretch (polar residues) spans 9 to 18; it reads VSDTSSLQSQ. Residues 10–322 are a coiled coil; the sequence is SDTSSLQSQL…LKLRLKTIED (313 aa). A compositionally biased stretch (basic and acidic residues) spans 60–80; sequence KLGATENQVDQKELERKKLEE. Residues 190–400 are required for targeting to microtubules; sequence FLEKINRQKV…ITANGLTDQH (211 aa). Positions 426-501 form a coiled coil; the sequence is DRLQKEVIAL…EESKLCRKAK (76 aa).

It belongs to the MAP70 family. As to quaternary structure, interacts with MAP70.1 and itself.

It localises to the cytoplasm. The protein localises to the cytoskeleton. Functionally, plant-specific protein that interact with microtubules and regulates microtubule dynamics. May play a role in anisotropic cell expansion and organ growth. In association with MAP70.1, is essential for the normal banding pattern of secondary cell wall and for the proper development of xylem tracheary elements and wood formation. This is Microtubule-associated protein 70-5 (MAP70.5) from Arabidopsis thaliana (Mouse-ear cress).